A 319-amino-acid polypeptide reads, in one-letter code: Urease accessory protein UreD (319 aa).

A disordered region spans residues 254-273 (PDPVGSPAARRESVPAKRAE). The segment covering 262 to 273 (ARRESVPAKRAE) has biased composition (basic and acidic residues).

The protein belongs to the UreD family. In terms of assembly, ureD, UreF and UreG form a complex that acts as a GTP-hydrolysis-dependent molecular chaperone, activating the urease apoprotein by helping to assemble the nickel containing metallocenter of UreC. The UreE protein probably delivers the nickel.

The protein resides in the cytoplasm. Required for maturation of urease via the functional incorporation of the urease nickel metallocenter. The chain is Urease accessory protein UreD from Frankia casuarinae (strain DSM 45818 / CECT 9043 / HFP020203 / CcI3).